We begin with the raw amino-acid sequence, 23 residues long: NADP-dependent malic enzyme (23 aa).

This sequence belongs to the malic enzymes family. As to quaternary structure, homotetramer.

The catalysed reaction is (S)-malate + NADP(+) = pyruvate + CO2 + NADPH. The enzyme catalyses oxaloacetate + H(+) = pyruvate + CO2. In Populus euphratica (Euphrates poplar), this protein is NADP-dependent malic enzyme.